We begin with the raw amino-acid sequence, 969 residues long: Glycine dehydrogenase (decarboxylating) (969 aa).

The residue at position 716 (Lys716) is an N6-(pyridoxal phosphate)lysine.

This sequence belongs to the GcvP family. The glycine cleavage system is composed of four proteins: P, T, L and H. Pyridoxal 5'-phosphate serves as cofactor.

It catalyses the reaction N(6)-[(R)-lipoyl]-L-lysyl-[glycine-cleavage complex H protein] + glycine + H(+) = N(6)-[(R)-S(8)-aminomethyldihydrolipoyl]-L-lysyl-[glycine-cleavage complex H protein] + CO2. Its function is as follows. The glycine cleavage system catalyzes the degradation of glycine. The P protein binds the alpha-amino group of glycine through its pyridoxal phosphate cofactor; CO(2) is released and the remaining methylamine moiety is then transferred to the lipoamide cofactor of the H protein. The chain is Glycine dehydrogenase (decarboxylating) from Shewanella woodyi (strain ATCC 51908 / MS32).